The chain runs to 383 residues: Histidine decarboxylase (383 aa).

Residue H120 participates in substrate binding. At K233 the chain carries N6-(pyridoxal phosphate)lysine.

It belongs to the group II decarboxylase family. In terms of assembly, homotetramer. It depends on pyridoxal 5'-phosphate as a cofactor.

It catalyses the reaction L-histidine + H(+) = histamine + CO2. In Acinetobacter baumannii (strain ACICU), this protein is Histidine decarboxylase.